We begin with the raw amino-acid sequence, 186 residues long: MAKAIKRIQKIEVTEEDQRKRDLREIEDALIDHKEAILETLHMLGHMNERGVLPLLRGLFGQGDKVLDILVKKADTEETANTLKNLLLLFGTLGMLDVKQLEPLILKVNAGVASAVEQKNSEEKTGYFDIIRSLKDPEINKSITLLFSFLKGMGQDTKELERTTQPPEHQKHHQEPREKRGMNKRD.

The tract at residues 156-186 (DTKELERTTQPPEHQKHHQEPREKRGMNKRD) is disordered. The segment covering 173 to 186 (HQEPREKRGMNKRD) has biased composition (basic and acidic residues).

This is an uncharacterized protein from Bacillus subtilis (strain 168).